A 185-amino-acid chain; its full sequence is Photosystem I assembly protein Ycf4 (185 aa).

The next 2 membrane-spanning stretches (helical) occupy residues 20–40 and 57–77; these read GNFF…AVGA and ILFF…LFIS.

The protein belongs to the Ycf4 family.

The protein localises to the plastid. It is found in the chloroplast thylakoid membrane. In terms of biological role, seems to be required for the assembly of the photosystem I complex. This chain is Photosystem I assembly protein Ycf4, found in Sorghum bicolor (Sorghum).